The sequence spans 313 residues: Carbamate kinase 2 (313 aa).

This sequence belongs to the carbamate kinase family.

The protein resides in the cytoplasm. The catalysed reaction is hydrogencarbonate + NH4(+) + ATP = carbamoyl phosphate + ADP + H2O + H(+). It participates in metabolic intermediate metabolism; carbamoyl phosphate degradation; CO(2) and NH(3) from carbamoyl phosphate: step 1/1. This is Carbamate kinase 2 (arcC2) from Staphylococcus aureus (strain MRSA252).